The sequence spans 134 residues: Small ribosomal subunit protein bS16 (134 aa).

The tract at residues 115-134 (AKLRRRQAKKAAEAAGSAEG) is disordered.

Belongs to the bacterial ribosomal protein bS16 family.

This Chlorobaculum tepidum (strain ATCC 49652 / DSM 12025 / NBRC 103806 / TLS) (Chlorobium tepidum) protein is Small ribosomal subunit protein bS16.